A 165-amino-acid chain; its full sequence is Small ribosomal subunit protein uS5 (165 aa).

Positions 10 to 73 (LNEKLIAVNR…EKARRNMVTV (64 aa)) constitute an S5 DRBM domain.

The protein belongs to the universal ribosomal protein uS5 family. As to quaternary structure, part of the 30S ribosomal subunit. Contacts proteins S4 and S8.

Functionally, with S4 and S12 plays an important role in translational accuracy. Located at the back of the 30S subunit body where it stabilizes the conformation of the head with respect to the body. This is Small ribosomal subunit protein uS5 from Photobacterium profundum (strain SS9).